A 155-amino-acid polypeptide reads, in one-letter code: Protein-export protein SecB (155 aa).

This sequence belongs to the SecB family. Homotetramer, a dimer of dimers. One homotetramer interacts with 1 SecA dimer.

The protein resides in the cytoplasm. Its function is as follows. One of the proteins required for the normal export of preproteins out of the cell cytoplasm. It is a molecular chaperone that binds to a subset of precursor proteins, maintaining them in a translocation-competent state. It also specifically binds to its receptor SecA. The sequence is that of Protein-export protein SecB from Enterobacter sp. (strain 638).